The following is a 302-amino-acid chain: Sulfate adenylyltransferase subunit 2 (302 aa).

The protein belongs to the PAPS reductase family. CysD subfamily. In terms of assembly, heterodimer composed of CysD, the smaller subunit, and CysN.

It carries out the reaction sulfate + ATP + H(+) = adenosine 5'-phosphosulfate + diphosphate. Its pathway is sulfur metabolism; hydrogen sulfide biosynthesis; sulfite from sulfate: step 1/3. Its function is as follows. With CysN forms the ATP sulfurylase (ATPS) that catalyzes the adenylation of sulfate producing adenosine 5'-phosphosulfate (APS) and diphosphate, the first enzymatic step in sulfur assimilation pathway. APS synthesis involves the formation of a high-energy phosphoric-sulfuric acid anhydride bond driven by GTP hydrolysis by CysN coupled to ATP hydrolysis by CysD. In Shigella boydii serotype 4 (strain Sb227), this protein is Sulfate adenylyltransferase subunit 2.